The primary structure comprises 396 residues: 1-deoxy-D-xylulose 5-phosphate reductoisomerase (396 aa).

Positions 10, 11, 12, 13, 36, 37, 38, and 124 each coordinate NADPH. Residue K125 coordinates 1-deoxy-D-xylulose 5-phosphate. E126 is a binding site for NADPH. D150 contributes to the Mn(2+) binding site. Positions 151, 152, 186, and 209 each coordinate 1-deoxy-D-xylulose 5-phosphate. E152 serves as a coordination point for Mn(2+). Residue G215 participates in NADPH binding. 1-deoxy-D-xylulose 5-phosphate contacts are provided by S222, N227, K228, and E231. A Mn(2+)-binding site is contributed by E231.

Belongs to the DXR family. Requires Mg(2+) as cofactor. The cofactor is Mn(2+).

It catalyses the reaction 2-C-methyl-D-erythritol 4-phosphate + NADP(+) = 1-deoxy-D-xylulose 5-phosphate + NADPH + H(+). It functions in the pathway isoprenoid biosynthesis; isopentenyl diphosphate biosynthesis via DXP pathway; isopentenyl diphosphate from 1-deoxy-D-xylulose 5-phosphate: step 1/6. Catalyzes the NADPH-dependent rearrangement and reduction of 1-deoxy-D-xylulose-5-phosphate (DXP) to 2-C-methyl-D-erythritol 4-phosphate (MEP). This chain is 1-deoxy-D-xylulose 5-phosphate reductoisomerase, found in Actinobacillus pleuropneumoniae serotype 5b (strain L20).